The following is a 506-amino-acid chain: Histidine ammonia-lyase (506 aa).

Positions 143-145 form a cross-link, 5-imidazolinone (Ala-Gly); the sequence is ASG. Ser-144 is modified (2,3-didehydroalanine (Ser)).

The protein belongs to the PAL/histidase family. Contains an active site 4-methylidene-imidazol-5-one (MIO), which is formed autocatalytically by cyclization and dehydration of residues Ala-Ser-Gly.

The protein resides in the cytoplasm. It catalyses the reaction L-histidine = trans-urocanate + NH4(+). It functions in the pathway amino-acid degradation; L-histidine degradation into L-glutamate; N-formimidoyl-L-glutamate from L-histidine: step 1/3. This Salmonella choleraesuis (strain SC-B67) protein is Histidine ammonia-lyase.